The chain runs to 75 residues: Movement protein TGBp3 (75 aa).

Topologically, residues 1–2 are lumenal; sequence MR. Residues 3–23 traverse the membrane as a helical segment; sequence VLDLILALITAAVVGYTIALV. The Cytoplasmic portion of the chain corresponds to 24 to 75; sequence SNSGCYVHFDGRSATTTCPPGPWVESIANGLYTAGLARPHPEPECERRQSSW.

It belongs to the Tymovirales TGBp3 protein family.

Its subcellular location is the host endoplasmic reticulum membrane. Plays a role in viral cell-to-cell propagation, by facilitating genome transport to neighboring plant cells through plasmosdesmata. May induce the formation of granular vesicles derived from the Endoplasmic reticulum, which align on actin filaments. The sequence is that of Movement protein TGBp3 from Strawberry mild yellow edge-associated virus (SMYEaV).